Here is a 133-residue protein sequence, read N- to C-terminus: Endoribonuclease YbeY (133 aa).

Zn(2+) contacts are provided by histidine 105, histidine 109, and histidine 115.

The protein belongs to the endoribonuclease YbeY family. It depends on Zn(2+) as a cofactor.

Its subcellular location is the cytoplasm. Single strand-specific metallo-endoribonuclease involved in late-stage 70S ribosome quality control and in maturation of the 3' terminus of the 16S rRNA. The chain is Endoribonuclease YbeY from Lawsonia intracellularis (strain PHE/MN1-00).